Consider the following 221-residue polypeptide: MAEKQKAVAKQEKVAISKRDPWALKKWFSVYAPSYLGGVFLAEVPANEAQKLLMRTLEVSLYDITKDISHLPIKLKFQIHRVEGLKALTRFKGLELTRDYIRSLVRKGTSKVTAITEVKTKDGMVMRIAVLGITTHRIGTAQKSAMRKKMIETLVKKAAELDSGQFLKEILEGTLAADLFIVAKKIAPMRKVEIAKIKVLKYPPEEEQIVVKEAVAEVTSA.

It belongs to the eukaryotic ribosomal protein eS1 family.

The protein is Small ribosomal subunit protein eS1 of Pyrobaculum aerophilum (strain ATCC 51768 / DSM 7523 / JCM 9630 / CIP 104966 / NBRC 100827 / IM2).